Reading from the N-terminus, the 105-residue chain is Large ribosomal subunit protein uL24 (105 aa).

Belongs to the universal ribosomal protein uL24 family. Part of the 50S ribosomal subunit.

Its function is as follows. One of two assembly initiator proteins, it binds directly to the 5'-end of the 23S rRNA, where it nucleates assembly of the 50S subunit. Functionally, one of the proteins that surrounds the polypeptide exit tunnel on the outside of the subunit. The sequence is that of Large ribosomal subunit protein uL24 from Methylocella silvestris (strain DSM 15510 / CIP 108128 / LMG 27833 / NCIMB 13906 / BL2).